A 507-amino-acid chain; its full sequence is Histidine ammonia-lyase (507 aa).

Residues 141-143 (ASG) constitute a cross-link (5-imidazolinone (Ala-Gly)). 2,3-didehydroalanine (Ser) is present on Ser142.

The protein belongs to the PAL/histidase family. Post-translationally, contains an active site 4-methylidene-imidazol-5-one (MIO), which is formed autocatalytically by cyclization and dehydration of residues Ala-Ser-Gly.

It localises to the cytoplasm. The catalysed reaction is L-histidine = trans-urocanate + NH4(+). The protein operates within amino-acid degradation; L-histidine degradation into L-glutamate; N-formimidoyl-L-glutamate from L-histidine: step 1/3. In Burkholderia ambifaria (strain ATCC BAA-244 / DSM 16087 / CCUG 44356 / LMG 19182 / AMMD) (Burkholderia cepacia (strain AMMD)), this protein is Histidine ammonia-lyase.